A 214-amino-acid polypeptide reads, in one-letter code: Non-structural protein NP-1 (214 aa).

Disordered regions lie at residues Met1–Asn85 and Glu192–Asn214. The span at Ser33–Gly43 shows a compositional bias: basic residues. Positions Glu44–Gln55 are enriched in basic and acidic residues. Residues Asp56–Ala71 are compositionally biased toward polar residues. Positions Glu192–Met201 are enriched in acidic residues.

It belongs to the Bocaparvovirus Non-structural protein NP-1 family.

It localises to the host nucleus. Its function is as follows. Required for the expression of the capsid proteins. Performs the splicing and internal polyadenylation of the viral capsid-encoding mRNA precursor, which allows its maturation and expression. Transactivates the viral promoter. This chain is Non-structural protein NP-1 (NP1), found in Human bocavirus 4 (HBoV4).